A 201-amino-acid chain; its full sequence is Peptidyl-tRNA hydrolase (201 aa).

Tyr-15 serves as a coordination point for tRNA. The active-site Proton acceptor is the His-20. TRNA-binding residues include Tyr-66, Asn-68, and Asn-114.

Belongs to the PTH family. In terms of assembly, monomer.

Its subcellular location is the cytoplasm. The catalysed reaction is an N-acyl-L-alpha-aminoacyl-tRNA + H2O = an N-acyl-L-amino acid + a tRNA + H(+). In terms of biological role, hydrolyzes ribosome-free peptidyl-tRNAs (with 1 or more amino acids incorporated), which drop off the ribosome during protein synthesis, or as a result of ribosome stalling. Catalyzes the release of premature peptidyl moieties from peptidyl-tRNA molecules trapped in stalled 50S ribosomal subunits, and thus maintains levels of free tRNAs and 50S ribosomes. In Burkholderia mallei (strain ATCC 23344), this protein is Peptidyl-tRNA hydrolase.